A 1096-amino-acid polypeptide reads, in one-letter code: Protein spire (1096 aa).

Disordered stretches follow at residues 1-79 (MTEH…GNGT) and 184-211 (VESQEQEASQQEQQQKQPQMDDSATSSV). Over residues 37 to 51 (LSTSPDSANGDAQQA) the composition is skewed to polar residues. Positions 53 to 65 (THTHIISHTHSKG) are enriched in basic residues. Composition is skewed to low complexity over residues 66–77 (AAKTQTQTQNGN) and 189–201 (QEASQQEQQQKQP). The 256-residue stretch at 111–366 (VTLNNILDSF…RALATETIEL (256 aa)) folds into the KIND domain. The stretch at 315–340 (KRWDDEAEEERNDTKELEHIIETCRN) forms a coiled coil. WH2 domains lie at 436–454 (PYEILMGDIRAKKYQLRKV) and 500–517 (PREQLMESIRQGKELKQI). 3 disordered regions span residues 560–588 (DDSSMSSSHSTAATHQHHQQHQPHHAHLA), 614–656 (QECQ…PSFT), and 693–762 (QSNL…LGPW). Residues 574-585 (HQHHQQHQPHHA) show a composition bias toward basic residues. Composition is skewed to low complexity over residues 633–645 (APRQTLPQPQAQA) and 714–725 (DAGSQSQSGASS). The segment covering 737–754 (EGDHSQTTDGPPRLDEAH) has biased composition (basic and acidic residues). Residues 780 to 800 (LSVTLAEIVHIRSVMTKAELE) form a spir-box region. Residues 874–894 (PASSSTPSPSHHAHQAHSSST) are compositionally biased toward low complexity. Disordered stretches follow at residues 874-899 (PASSSTPSPSHHAHQAHSSSTGNIMD), 912-958 (RSES…APGH), and 997-1021 (RSMEGPRSLPVHSPAYRPLSNSSTL). A compositionally biased stretch (polar residues) spans 921–941 (STVGSAPSSPKHQRSNMSTPG).

It belongs to the spire family. In terms of assembly, interacts with bsk, Rho1, Rac1, Cdc42 and wash. Interacts with capu. Phosphorylated by Jnk kinase (bsk).

It localises to the cytoplasm. Its subcellular location is the cytoskeleton. It is found in the perinuclear region. The protein localises to the cell membrane. The protein resides in the cytoplasmic vesicle membrane. Its function is as follows. Acts as an actin nucleation factor, remains associated with the slow-growing pointed end of the new filament. Promotes dissociation of capu from the barbed end of actin filaments. Involved in intracellular vesicle transport along actin fibers, providing a novel link between actin cytoskeleton dynamics and intracellular transport. Required for localization of determinants within the developing oocyte to the posterior pole and to the dorsal anterior corner. Links Rho family signaling and Jnk function to the actin cytoskeleton. In Drosophila pseudoobscura pseudoobscura (Fruit fly), this protein is Protein spire.